Consider the following 287-residue polypeptide: 4-diphosphocytidyl-2-C-methyl-D-erythritol kinase (287 aa).

Residue Lys-12 is part of the active site. 95 to 105 (PAQAGMGGGSS) is an ATP binding site. Asp-137 is a catalytic residue.

It belongs to the GHMP kinase family. IspE subfamily.

It catalyses the reaction 4-CDP-2-C-methyl-D-erythritol + ATP = 4-CDP-2-C-methyl-D-erythritol 2-phosphate + ADP + H(+). It functions in the pathway isoprenoid biosynthesis; isopentenyl diphosphate biosynthesis via DXP pathway; isopentenyl diphosphate from 1-deoxy-D-xylulose 5-phosphate: step 3/6. Functionally, catalyzes the phosphorylation of the position 2 hydroxy group of 4-diphosphocytidyl-2C-methyl-D-erythritol. This is 4-diphosphocytidyl-2-C-methyl-D-erythritol kinase from Delftia acidovorans (strain DSM 14801 / SPH-1).